A 575-amino-acid chain; its full sequence is Urease subunit alpha (575 aa).

One can recognise a Urease domain in the interval 138–575 (GAVDCHVHLI…LPMAQRYFLF (438 aa)). Ni(2+)-binding residues include histidine 143, histidine 145, and lysine 226. Lysine 226 carries the N6-carboxylysine modification. Histidine 228 serves as a coordination point for substrate. Ni(2+) contacts are provided by histidine 255 and histidine 281. The active-site Proton donor is histidine 329. Aspartate 369 is a Ni(2+) binding site.

This sequence belongs to the metallo-dependent hydrolases superfamily. Urease alpha subunit family. As to quaternary structure, heterotrimer of UreA (gamma), UreB (beta) and UreC (alpha) subunits. Three heterotrimers associate to form the active enzyme. The cofactor is Ni cation. In terms of processing, carboxylation allows a single lysine to coordinate two nickel ions.

It is found in the cytoplasm. The catalysed reaction is urea + 2 H2O + H(+) = hydrogencarbonate + 2 NH4(+). It functions in the pathway nitrogen metabolism; urea degradation; CO(2) and NH(3) from urea (urease route): step 1/1. This is Urease subunit alpha from Frankia alni (strain DSM 45986 / CECT 9034 / ACN14a).